The primary structure comprises 204 residues: Large ribosomal subunit protein uL13 (204 aa).

It belongs to the universal ribosomal protein uL13 family.

In Choristoneura parallela (Spotted fireworm moth), this protein is Large ribosomal subunit protein uL13 (RpL13A).